The chain runs to 131 residues: Small ribosomal subunit protein uS11 (131 aa).

It belongs to the universal ribosomal protein uS11 family. In terms of assembly, part of the 30S ribosomal subunit. Interacts with proteins S7 and S18. Binds to IF-3.

Functionally, located on the platform of the 30S subunit, it bridges several disparate RNA helices of the 16S rRNA. Forms part of the Shine-Dalgarno cleft in the 70S ribosome. The sequence is that of Small ribosomal subunit protein uS11 from Cellvibrio japonicus (strain Ueda107) (Pseudomonas fluorescens subsp. cellulosa).